Here is an 84-residue protein sequence, read N- to C-terminus: uncharacterized protein (84 aa).

The protein to M.jannaschii MJ1121.

This is an uncharacterized protein from Archaeoglobus fulgidus (strain ATCC 49558 / DSM 4304 / JCM 9628 / NBRC 100126 / VC-16).